A 531-amino-acid chain; its full sequence is Acetate CoA-transferase YdiF (531 aa).

E333 (5-glutamyl coenzyme A thioester intermediate) is an active-site residue.

This sequence belongs to the 3-oxoacid CoA-transferase family. In terms of assembly, homotetramer; dimer of dimers.

It carries out the reaction an acyl-CoA + acetate = a carboxylate + acetyl-CoA. Its function is as follows. CoA transferase having broad substrate specificity for short-chain acyl-CoA thioesters with the activity decreasing when the length of the carboxylic acid chain exceeds four carbons. May play a role in short-chain fatty acid metabolism in E.coli. This chain is Acetate CoA-transferase YdiF (ydiF), found in Escherichia coli (strain K12).